Here is a 320-residue protein sequence, read N- to C-terminus: Pseudouridine-5'-phosphate glycosidase (320 aa).

The active-site Proton donor is the Glu25. 2 residues coordinate substrate: Lys85 and Val105. Asp137 provides a ligand contact to Mn(2+). 139-141 (SAD) contributes to the substrate binding site. Lys158 functions as the Nucleophile in the catalytic mechanism.

This sequence belongs to the pseudouridine-5'-phosphate glycosidase family. In terms of assembly, homotrimer. Mn(2+) serves as cofactor.

The catalysed reaction is D-ribose 5-phosphate + uracil = psi-UMP + H2O. Catalyzes the reversible cleavage of pseudouridine 5'-phosphate (PsiMP) to ribose 5-phosphate and uracil. Functions biologically in the cleavage direction, as part of a pseudouridine degradation pathway. The polypeptide is Pseudouridine-5'-phosphate glycosidase (Rhodospirillum centenum (strain ATCC 51521 / SW)).